Here is a 239-residue protein sequence, read N- to C-terminus: Tetraspanin-9 (239 aa).

Topologically, residues 1–12 are cytoplasmic; it reads MARGCLCCVKYM. A helical membrane pass occupies residues 13-33; it reads LFLFNLLFWLGGCGLLGVGVW. Topologically, residues 34–55 are extracellular; the sequence is LSVSQGSFATLSPSFPSISAAN. Residues 56 to 76 form a helical membrane-spanning segment; sequence LIITLGAVIMVTGFLGCLGAI. The Cytoplasmic segment spans residues 77 to 85; it reads KENKCLLLS. Residues 86-106 traverse the membrane as a helical segment; that stretch reads FFITLLVILLAELILLILFFV. The Extracellular segment spans residues 107 to 203; the sequence is YTDNVSENAR…VEEWLDDNKH (97 aa). 2 N-linked (GlcNAc...) asparagine glycosylation sites follow: Asn-110 and Asn-180. A helical transmembrane segment spans residues 204-224; that stretch reads LLGTIAMCVLVIQLLGMAFSM. Residues 225-239 are Cytoplasmic-facing; that stretch reads TLYQQIHRSGKKYEA.

This sequence belongs to the tetraspanin (TM4SF) family.

It is found in the membrane. This is Tetraspanin-9 (tspan9) from Salmo salar (Atlantic salmon).